Reading from the N-terminus, the 205-residue chain is Large ribosomal subunit protein uL4 (205 aa).

The segment at 45-97 is disordered; that stretch reads RQGTSAVKNRSAVRGGGKKPWRQKGTGRARQGSIRAPQWRGGGTVFGPTPRSY. Residues 60 to 71 are compositionally biased toward basic residues; the sequence is GGKKPWRQKGTG.

The protein belongs to the universal ribosomal protein uL4 family. As to quaternary structure, part of the 50S ribosomal subunit.

Functionally, one of the primary rRNA binding proteins, this protein initially binds near the 5'-end of the 23S rRNA. It is important during the early stages of 50S assembly. It makes multiple contacts with different domains of the 23S rRNA in the assembled 50S subunit and ribosome. In terms of biological role, forms part of the polypeptide exit tunnel. The polypeptide is Large ribosomal subunit protein uL4 (Lactobacillus gasseri (strain ATCC 33323 / DSM 20243 / BCRC 14619 / CIP 102991 / JCM 1131 / KCTC 3163 / NCIMB 11718 / NCTC 13722 / AM63)).